Consider the following 719-residue polypeptide: Protein STRUBBELIG-RECEPTOR FAMILY 6 (719 aa).

Positions 1-29 (MRENWAVVALFTLCIVGFELRFIHGATDA) are cleaved as a signal peptide. Over 30–293 (SDTSALNTLF…SKKSGIGAGA (264 aa)) the chain is Extracellular. 6 LRR repeats span residues 97–118 (SLTELDLSSNNLGGDLPYQFPP), 119–140 (NLQRLNLANNQFTGAASYSLSQ), 143–164 (PLKYLNLGHNQFKGQIAIDFSK), 167–190 (SLTTLDFSFNSFTNSLPATFSSLT), 191–213 (SLKSLYLQNNQFSGTVDVLAGLP), and 214–234 (LETLNIANNDFTGWIPSSLKG). Residues 242 to 287 (NSFNTGPAPPPPPGTPPIRGSPSRKSGGRESRSSDESTRNGDSKKS) are disordered. Over residues 248–257 (PAPPPPPGTP) the composition is skewed to pro residues. Basic and acidic residues predominate over residues 268 to 286 (GGRESRSSDESTRNGDSKK). The helical transmembrane segment at 294–314 (IAGIIISLLVVTALLVAFFLF) threads the bilayer. At 315-719 (RRKKSKRSSP…GSADTTSDYM (405 aa)) the chain is on the cytoplasmic side. Disordered regions lie at residues 322 to 355 (SSPMDIEKTDNQPFTLASNDFHENNSIQSSSSVE) and 364 to 383 (SINLRPPPIDRNKSFDDEDS). Over residues 332–354 (NQPFTLASNDFHENNSIQSSSSV) the composition is skewed to polar residues. A Phosphoserine modification is found at serine 377. Positions 416–690 (FSVDNLLGEG…SEVVQALVVL (275 aa)) constitute a Protein kinase domain. Residues 422–430 (LGEGTFGRV) and lysine 444 each bind ATP. Residues 700-719 (TVGVDPSQRAGSADTTSDYM) form a disordered region. Residues 708–719 (RAGSADTTSDYM) show a composition bias toward polar residues.

This sequence belongs to the protein kinase superfamily. Ser/Thr protein kinase family. As to expression, expressed in seedlings, roots, stems, leaves, flowers and siliques.

It is found in the membrane. The sequence is that of Protein STRUBBELIG-RECEPTOR FAMILY 6 (SRF6) from Arabidopsis thaliana (Mouse-ear cress).